Consider the following 291-residue polypeptide: Potassium-transporting ATPase subunit beta (291 aa).

Residues 1–36 (MAALQEKKSCSQRMEEFRHYCWNPDTGQMLGRTLSR) lie on the Cytoplasmic side of the membrane. The chain crosses the membrane as a helical; Signal-anchor for type II membrane protein span at residues 37-57 (WVWISLYYVAFYVVMTGLFAL). Topologically, residues 58 to 291 (CIYVLMQTID…KVEFKLKIQK (234 aa)) are extracellular. 5 N-linked (GlcNAc...) asparagine glycosylation sites follow: N99, N103, N130, N146, and N161. C131 and C152 are joined by a disulfide. C162 and C178 are disulfide-bonded. Residues N193 and N222 are each glycosylated (N-linked (GlcNAc...) asparagine). An immunoglobulin-like region spans residues 194–291 (STPPRVDCTF…KVEFKLKIQK (98 aa)). A disulfide bridge links C201 with C263.

It belongs to the X(+)/potassium ATPases subunit beta family. As to quaternary structure, the ATPase pump is composed of two subunits: alpha (catalytic) and beta (regulatory). Interacts with alpha subunit ATP12A; this interaction is required for the formation of a functionally active pump and targeting at the plasma membrane. Interacts (via N-terminus) with alpha subunit ATP4A (via the P-domain). In terms of processing, N-glycosylation is necessary for assembly and functional expression of the pump at the plasma membrane.

The protein resides in the apical cell membrane. It localises to the cell membrane. Functionally, the beta subunit of the gastric H(+)/K(+) ATPase pump which transports H(+) ions in exchange for K(+) ions across the apical membrane of parietal cells. Plays a structural and regulatory role in the assembly and membrane targeting of a functionally active pump. Within a transport cycle, the transfer of a H(+) ion across the membrane is coupled to ATP hydrolysis and is associated with a transient phosphorylation of the alpha subunit that shifts the pump conformation from inward-facing (E1) to outward-facing state (E2). Interacts with the phosphorylation domain of the alpha subunit and functions as a ratchet, stabilizing the lumenal-open E2 conformation and preventing the reverse reaction of the transport cycle. This Oryctolagus cuniculus (Rabbit) protein is Potassium-transporting ATPase subunit beta (ATP4B).